Consider the following 156-residue polypeptide: MDITFTIFAQSLAFAALIWIVATKIWPPLIKVIEERQQKIAEGLAAADLGQKELAQAQEEIKKTLKNAREKANEIIEQAHARAHQIIEAAKAEAITETNRQQNLAQVEIEAAAKRAREELRKHVSILAVNGAEKLLKREIDVNTHKMLLDELAAEI.

Residues 3–23 (ITFTIFAQSLAFAALIWIVAT) traverse the membrane as a helical segment.

The protein belongs to the ATPase B chain family. In terms of assembly, F-type ATPases have 2 components, F(1) - the catalytic core - and F(0) - the membrane proton channel. F(1) has five subunits: alpha(3), beta(3), gamma(1), delta(1), epsilon(1). F(0) has three main subunits: a(1), b(2) and c(10-14). The alpha and beta chains form an alternating ring which encloses part of the gamma chain. F(1) is attached to F(0) by a central stalk formed by the gamma and epsilon chains, while a peripheral stalk is formed by the delta and b chains.

It is found in the cell inner membrane. Its function is as follows. F(1)F(0) ATP synthase produces ATP from ADP in the presence of a proton or sodium gradient. F-type ATPases consist of two structural domains, F(1) containing the extramembraneous catalytic core and F(0) containing the membrane proton channel, linked together by a central stalk and a peripheral stalk. During catalysis, ATP synthesis in the catalytic domain of F(1) is coupled via a rotary mechanism of the central stalk subunits to proton translocation. Functionally, component of the F(0) channel, it forms part of the peripheral stalk, linking F(1) to F(0). This Xylella fastidiosa (strain 9a5c) protein is ATP synthase subunit b.